A 205-amino-acid chain; its full sequence is Ras-related protein rab-6.1 (205 aa).

GTP-binding positions include 18 to 25 (GEQSVGKT), Thr43, 66 to 70 (DTAGQ), and 124 to 127 (NKTD). 2 S-geranylgeranyl cysteine lipidation sites follow: Cys203 and Cys205. Cys205 is modified (cysteine methyl ester).

This sequence belongs to the small GTPase superfamily. Rab family. In terms of assembly, interacts with GARP complex component vps-52. As to expression, highly expressed in body wall muscle, intestine, somatic gonad, distal tip cells, vulva, and neurons including AVB, AVD, RIG, and PVC (at protein level). Not expressed in AVA and RMDV neurons.

The protein localises to the cell membrane. It is found in the cell projection. It localises to the dendrite. Its subcellular location is the perikaryon. The protein resides in the golgi apparatus. The protein localises to the cytoplasmic vesicle. It is found in the secretory vesicle. Functionally, the small GTPases Rab are key regulators of intracellular membrane trafficking, from the formation of transport vesicles to their fusion with membranes. Rabs cycle between an inactive GDP-bound form and an active GTP-bound form that is able to recruit to membranes different set of downstream effectors directly responsible for vesicle formation, movement, tethering and fusion. In its active GTP-bound form, acts redundantly with rab-6.2 (in its active GTP-bound form) to positively regulate the retrograde trafficking of cargo molecules from endosomes to Golgi structures. Required for the retrograde trafficking of glr-1, a subunit of AMPA-type glutamate receptors (AMPRs), out of early endosomes and into the Golgi compartment in neurons. Together with rab-6.2, promotes the retrograde trafficking of mig-14 from endosomes to Golgi structures in the intestine. In oocytes, in its active GTP-bound form, involved in the membrane fusion and exocytosis of secretory vesicles (cortical granules) to play a role in the remodeling of the embryo surface following fertilization. Recruits sep-1 to cortical granules (derived from the Golgi complex) for exocytosis during the oocyte-to-embryo transition. Required for seam cell division and alae formation. Promotes spontaneous reversals in locomotion. In Caenorhabditis elegans, this protein is Ras-related protein rab-6.1.